The sequence spans 100 residues: Transcription and mRNA export factor SUS1 (100 aa).

This sequence belongs to the ENY2 family. As to quaternary structure, component of the nuclear pore complex (NPC)-associated TREX-2 complex (transcription and export complex 2), composed of at least SUS1, SAC3, THP1, SEM1, and CDC31. TREX-2 contains 2 SUS1 chains. The TREX-2 complex interacts with the nucleoporin NUP1. Component of the 1.8 MDa SAGA transcription coactivator-HAT complex. SAGA is built of 5 distinct domains with specialized functions. Within the SAGA complex, SUS1, SGF11, SGF73 and UBP8 form an additional subcomplex of SAGA called the DUB module (deubiquitination module). Interacts directly with THP1, SAC3, SGF11, and with the RNA polymerase II.

It is found in the nucleus. The protein localises to the nucleoplasm. It localises to the cytoplasm. The protein resides in the P-body. Its function is as follows. Involved in mRNA export coupled transcription activation by association with both the TREX-2 and the SAGA complexes. At the promoters, SAGA is required for recruitment of the basal transcription machinery. It influences RNA polymerase II transcriptional activity through different activities such as TBP interaction and promoter selectivity, interaction with transcription activators, and chromatin modification through histone acetylation and deubiquitination. Within the SAGA complex, participates in a subcomplex required for deubiquitination of H2B and for the maintenance of steady-state H3 methylation levels. The TREX-2 complex functions in docking export-competent ribonucleoprotein particles (mRNPs) to the nuclear entrance of the nuclear pore complex (nuclear basket). TREX-2 participates in mRNA export and accurate chromatin positioning in the nucleus by tethering genes to the nuclear periphery. May also be involved in cytoplasmic mRNA decay by interaction with components of P-bodies. In Candida glabrata (strain ATCC 2001 / BCRC 20586 / JCM 3761 / NBRC 0622 / NRRL Y-65 / CBS 138) (Yeast), this protein is Transcription and mRNA export factor SUS1.